The primary structure comprises 479 residues: Flotillin-like protein 3 (479 aa).

Residue cysteine 36 is the site of S-palmitoyl cysteine attachment. Coiled-coil stretches lie at residues 227-251 (KVKT…AALA) and 306-326 (EYET…KQAE).

It belongs to the band 7/mec-2 family. Flotillin subfamily. Post-translationally, may be palmitoylated.

It localises to the cell membrane. The protein resides in the membrane. Its subcellular location is the caveola. In terms of biological role, may act as a scaffolding protein within caveolar membranes, functionally participating in formation of caveolae or caveolae-like vesicles. The protein is Flotillin-like protein 3 (FLOT3) of Arabidopsis thaliana (Mouse-ear cress).